The following is a 285-amino-acid chain: MTATLIDGNALSKTLRAQAAERAAALAARGHRPGLAVILVGDNPASEVYVRNKIKACEDNGFFSLKDRYPATLSEPELLARIDELNRDPKIHGILVQLPLPAHIDSHKVIEAIAPEKDVDGFHVANAGALLTGKPLFRPCTPYGVMKMFEAYKIPLQGANAVVIGRSNIVGKPMALLLLEAGATVTICHSKTRELAAHTRAADIVVAAVGKRNVLTADMVKPGATVIDVGMNRNDEGKLCGDVDFAGVSQVAGHITPVPGGVGPMTITMLLVNTIEAAERAAAAA.

NADP(+) contacts are provided by residues 165-167 and Ser-190; that span reads GRS.

It belongs to the tetrahydrofolate dehydrogenase/cyclohydrolase family. As to quaternary structure, homodimer.

It carries out the reaction (6R)-5,10-methylene-5,6,7,8-tetrahydrofolate + NADP(+) = (6R)-5,10-methenyltetrahydrofolate + NADPH. The catalysed reaction is (6R)-5,10-methenyltetrahydrofolate + H2O = (6R)-10-formyltetrahydrofolate + H(+). It participates in one-carbon metabolism; tetrahydrofolate interconversion. Catalyzes the oxidation of 5,10-methylenetetrahydrofolate to 5,10-methenyltetrahydrofolate and then the hydrolysis of 5,10-methenyltetrahydrofolate to 10-formyltetrahydrofolate. This chain is Bifunctional protein FolD, found in Burkholderia pseudomallei (strain 1710b).